The following is a 729-amino-acid chain: MPKFIEPSIEEIKAEKLYSDMGLTDAEYDKVVDILGREPNFTEVGIFSVMWSEHCSYKHSKPFLKQFPTTSEHVLMGPGEGAGVVDIGDDQAVVFKVESHNHPSAIEPYQGAATGVGGIIRDIVSIGARPINLLNSLRFGELDEIQNRTLTRGVVAGIGGYGNCIGIPTTAGEIEFDERYDGNPLVNAMCVGIIDHDMIQKGTAKGVGNSVIYVGLKTGRDGIHGATFASEELSEESESKRPSVQIGDPFVGKKLMEATLEAITFPELVGIQDMGAAGLTSSSSEMAAKGGSGMHMRLDQVPVREEGISPYEMMLSETQERMLLVVEKGTEQKFLDLFDKHELDSAVIGEVTDTNRFVLTYEDEVYADIPVEPLADEAPVYILEGEEKAHNTSKNDYSNVDVNDVFKKLLAHPTIASKRYLYEQYDQQVGANTVVKPGLQASVVRVEGTNKAIASTIDGEARYVYNQPYEGGKMVVAEAYRNLIAVGATPLAMTDCLNYGSPEKKEIYQQLIDSTKGMAEACEVLKTPVVSGNVSLYNETKGTSIFPTPVVGMVGLIEDIDYLNDFHPHAGDKLYLVGETRNDFGGSQLEKLLYGKVNHESEALDLSEEVEKGEQIKKAIRDGKASHVQTVGKGGLLITLARFSAFYGLGVDAKLDVTDAQLFSESQGRYIVAVKEGQTLDIPNAQEIGTVKDNGQFKVTNGQTTVEENVSTLNEIWEGAIPQCMTSAD.

H54 is a catalytic residue. Residues Y57 and K96 each coordinate ATP. Position 98 (E98) interacts with Mg(2+). Substrate-binding positions include 99 to 102 and R121; that span reads SHNH. Catalysis depends on H100, which acts as the Proton acceptor. D122 contacts Mg(2+). Q245 provides a ligand contact to substrate. Position 273 (D273) interacts with Mg(2+). 317–319 lines the substrate pocket; that stretch reads ETQ. 2 residues coordinate ATP: D495 and G532. N533 lines the Mg(2+) pocket. S535 lines the substrate pocket.

It belongs to the FGAMS family. Monomer. Part of the FGAM synthase complex composed of 1 PurL, 1 PurQ and 2 PurS subunits.

Its subcellular location is the cytoplasm. The catalysed reaction is N(2)-formyl-N(1)-(5-phospho-beta-D-ribosyl)glycinamide + L-glutamine + ATP + H2O = 2-formamido-N(1)-(5-O-phospho-beta-D-ribosyl)acetamidine + L-glutamate + ADP + phosphate + H(+). It participates in purine metabolism; IMP biosynthesis via de novo pathway; 5-amino-1-(5-phospho-D-ribosyl)imidazole from N(2)-formyl-N(1)-(5-phospho-D-ribosyl)glycinamide: step 1/2. Part of the phosphoribosylformylglycinamidine synthase complex involved in the purines biosynthetic pathway. Catalyzes the ATP-dependent conversion of formylglycinamide ribonucleotide (FGAR) and glutamine to yield formylglycinamidine ribonucleotide (FGAM) and glutamate. The FGAM synthase complex is composed of three subunits. PurQ produces an ammonia molecule by converting glutamine to glutamate. PurL transfers the ammonia molecule to FGAR to form FGAM in an ATP-dependent manner. PurS interacts with PurQ and PurL and is thought to assist in the transfer of the ammonia molecule from PurQ to PurL. The polypeptide is Phosphoribosylformylglycinamidine synthase subunit PurL (Staphylococcus carnosus (strain TM300)).